The following is a 107-amino-acid chain: Pyrimidine/purine nucleoside phosphorylase (107 aa).

The protein belongs to the nucleoside phosphorylase PpnP family.

The enzyme catalyses a purine D-ribonucleoside + phosphate = a purine nucleobase + alpha-D-ribose 1-phosphate. The catalysed reaction is adenosine + phosphate = alpha-D-ribose 1-phosphate + adenine. It carries out the reaction cytidine + phosphate = cytosine + alpha-D-ribose 1-phosphate. It catalyses the reaction guanosine + phosphate = alpha-D-ribose 1-phosphate + guanine. The enzyme catalyses inosine + phosphate = alpha-D-ribose 1-phosphate + hypoxanthine. The catalysed reaction is thymidine + phosphate = 2-deoxy-alpha-D-ribose 1-phosphate + thymine. It carries out the reaction uridine + phosphate = alpha-D-ribose 1-phosphate + uracil. It catalyses the reaction xanthosine + phosphate = alpha-D-ribose 1-phosphate + xanthine. In terms of biological role, catalyzes the phosphorolysis of diverse nucleosides, yielding D-ribose 1-phosphate and the respective free bases. Can use uridine, adenosine, guanosine, cytidine, thymidine, inosine and xanthosine as substrates. Also catalyzes the reverse reactions. The chain is Pyrimidine/purine nucleoside phosphorylase from Azoarcus sp. (strain BH72).